A 218-amino-acid chain; its full sequence is Putative NAD(P)H nitroreductase SH0546 (218 aa).

Belongs to the nitroreductase family. The cofactor is FMN.

This chain is Putative NAD(P)H nitroreductase SH0546, found in Staphylococcus haemolyticus (strain JCSC1435).